The primary structure comprises 414 residues: Glucose-1-phosphate adenylyltransferase (414 aa).

Alpha-D-glucose 1-phosphate-binding positions include Y99, G164, 181–182 (EK), and S199.

It belongs to the bacterial/plant glucose-1-phosphate adenylyltransferase family. Homotetramer.

It carries out the reaction alpha-D-glucose 1-phosphate + ATP + H(+) = ADP-alpha-D-glucose + diphosphate. The protein operates within glycan biosynthesis; glycogen biosynthesis. In terms of biological role, involved in the biosynthesis of ADP-glucose, a building block required for the elongation reactions to produce glycogen. Catalyzes the reaction between ATP and alpha-D-glucose 1-phosphate (G1P) to produce pyrophosphate and ADP-Glc. In Bifidobacterium adolescentis (strain ATCC 15703 / DSM 20083 / NCTC 11814 / E194a), this protein is Glucose-1-phosphate adenylyltransferase.